Here is a 398-residue protein sequence, read N- to C-terminus: S-adenosylmethionine synthase (398 aa).

His16 lines the ATP pocket. Residue Asp18 participates in Mg(2+) binding. K(+) is bound at residue Glu51. L-methionine-binding residues include Glu64 and Gln108. A flexible loop region spans residues 108–118 (QSADIAQGVDA). ATP-binding positions include 176 to 178 (DSK), 242 to 243 (KF), Asp251, 257 to 258 (RK), Ala274, and Lys278. Asp251 is a binding site for L-methionine. L-methionine is bound at residue Lys282.

The protein belongs to the AdoMet synthase family. Homotetramer; dimer of dimers. The cofactor is Mg(2+). Requires K(+) as cofactor.

The protein localises to the cytoplasm. It carries out the reaction L-methionine + ATP + H2O = S-adenosyl-L-methionine + phosphate + diphosphate. The protein operates within amino-acid biosynthesis; S-adenosyl-L-methionine biosynthesis; S-adenosyl-L-methionine from L-methionine: step 1/1. Functionally, catalyzes the formation of S-adenosylmethionine (AdoMet) from methionine and ATP. The overall synthetic reaction is composed of two sequential steps, AdoMet formation and the subsequent tripolyphosphate hydrolysis which occurs prior to release of AdoMet from the enzyme. This chain is S-adenosylmethionine synthase, found in Bradyrhizobium diazoefficiens (strain JCM 10833 / BCRC 13528 / IAM 13628 / NBRC 14792 / USDA 110).